We begin with the raw amino-acid sequence, 167 residues long: Lipoprotein signal peptidase (167 aa).

3 consecutive transmembrane segments (helical) span residues 10–30 (LIWL…KAWV), 68–88 (WQLW…AFWL), and 98–118 (SAVP…DRLM). Active-site residues include Asp-124 and Asp-142. Residues 138–158 (FNIADSAIVGGAIGIALFGLF) form a helical membrane-spanning segment.

It belongs to the peptidase A8 family.

The protein resides in the cell inner membrane. It catalyses the reaction Release of signal peptides from bacterial membrane prolipoproteins. Hydrolyzes -Xaa-Yaa-Zaa-|-(S,diacylglyceryl)Cys-, in which Xaa is hydrophobic (preferably Leu), and Yaa (Ala or Ser) and Zaa (Gly or Ala) have small, neutral side chains.. Its pathway is protein modification; lipoprotein biosynthesis (signal peptide cleavage). Functionally, this protein specifically catalyzes the removal of signal peptides from prolipoproteins. The chain is Lipoprotein signal peptidase from Xanthomonas campestris pv. campestris (strain 8004).